Here is a 249-residue protein sequence, read N- to C-terminus: 2,3-bisphosphoglycerate-dependent phosphoglycerate mutase (249 aa).

Substrate contacts are provided by residues 8 to 15, 21 to 22, arginine 60, 87 to 90, lysine 98, 114 to 115, and 183 to 184; these read RHGQSAWN, TG, ERHY, RR, and GN. Histidine 9 (tele-phosphohistidine intermediate) is an active-site residue. Glutamate 87 functions as the Proton donor/acceptor in the catalytic mechanism. The disordered stretch occupies residues 115 to 137; it reads RSYDTPPPPLPADDPRSPAGDAR.

Belongs to the phosphoglycerate mutase family. BPG-dependent PGAM subfamily. In terms of assembly, homodimer.

It carries out the reaction (2R)-2-phosphoglycerate = (2R)-3-phosphoglycerate. Its pathway is carbohydrate degradation; glycolysis; pyruvate from D-glyceraldehyde 3-phosphate: step 3/5. In terms of biological role, catalyzes the interconversion of 2-phosphoglycerate and 3-phosphoglycerate. This is 2,3-bisphosphoglycerate-dependent phosphoglycerate mutase from Nitratidesulfovibrio vulgaris (strain DSM 19637 / Miyazaki F) (Desulfovibrio vulgaris).